The chain runs to 217 residues: Protein dao-4 (217 aa).

Residues 1–21 (MKIALYSILLITVCYLSSTDA) form the signal peptide.

The protein resides in the nucleus. Its subcellular location is the secreted. Functionally, probably acts downstream of the Wnt signaling pathway. This is Protein dao-4 from Caenorhabditis elegans.